Consider the following 248-residue polypeptide: Probable cyclic nucleotide phosphodiesterase CBUA0032 (248 aa).

Fe cation contacts are provided by Asp13, His15, Asp52, Asn82, His152, His191, and His193. Residues His15, Asp52, and 82-83 each bind AMP; that span reads NH. His193 contacts AMP.

This sequence belongs to the cyclic nucleotide phosphodiesterase class-III family. The cofactor is Fe(2+).

The chain is Probable cyclic nucleotide phosphodiesterase CBUA0032 from Coxiella burnetii (strain RSA 493 / Nine Mile phase I).